Reading from the N-terminus, the 312-residue chain is tRNA dimethylallyltransferase (312 aa).

10–17 (GPTASGKS) serves as a coordination point for ATP. 12–17 (TASGKS) contacts substrate. The interval 35–38 (DSKQ) is interaction with substrate tRNA.

It belongs to the IPP transferase family. As to quaternary structure, monomer. The cofactor is Mg(2+).

The enzyme catalyses adenosine(37) in tRNA + dimethylallyl diphosphate = N(6)-dimethylallyladenosine(37) in tRNA + diphosphate. Functionally, catalyzes the transfer of a dimethylallyl group onto the adenine at position 37 in tRNAs that read codons beginning with uridine, leading to the formation of N6-(dimethylallyl)adenosine (i(6)A). This is tRNA dimethylallyltransferase from Anaplasma phagocytophilum (strain HZ).